A 619-amino-acid polypeptide reads, in one-letter code: Protein DFG16 (619 aa).

A topological domain (extracellular) is located at residue Met1. The chain crosses the membrane as a helical span at residues 2-22; it reads IIRLHFYYLLTLVYHLGLVGA. Over 23–167 the chain is Cytoplasmic; the sequence is YEKAARKRIQ…KDPFPLGMIM (145 aa). Residues 33–54 form a disordered region; that stretch reads PPDLIPGPPGHKLGDERPPHYD. Residues 44-54 show a composition bias toward basic and acidic residues; that stretch reads KLGDERPPHYD. The chain crosses the membrane as a helical span at residues 168–188; that stretch reads ITFASGCICVATWMLFLVVLL. The Extracellular segment spans residues 189–203; that stretch reads LPSDNHNRRNKVVHV. Residues 204 to 224 traverse the membrane as a helical segment; the sequence is YVLFSAIIRTVFLNETIAVIF. The Cytoplasmic portion of the chain corresponds to 225-291; that stretch reads DSQYHDDYQD…IPFKMKKGTH (67 aa). Residues 292–312 traverse the membrane as a helical segment; it reads IIITVGCFLSLADNILFANLL. The Extracellular portion of the chain corresponds to 313 to 321; it reads WRKNLVVLK. A helical membrane pass occupies residues 322–342; the sequence is VFYKLIELLIYTIFISIICYF. At 343-378 the chain is on the cytoplasmic side; that stretch reads TWHNFAYILLPKTAEINTDGKCKTKLRILWENYHET. Residues 379–399 form a helical membrane-spanning segment; the sequence is IPLLAYNILIFILFYFTTIFF. Residues 400–410 lie on the Extracellular side of the membrane; sequence AAFTKHVRGWT. Residues 411 to 431 form a helical membrane-spanning segment; that stretch reads FNFVHLLKVLITVNVWGLIGV. Over 432–619 the chain is Cytoplasmic; that stretch reads LEKRELHISK…NHIYNYENSD (188 aa). Composition is skewed to polar residues over residues 485–504 and 526–549; these read KSNT…SPTW and KFGQ…TLSK. Disordered stretches follow at residues 485-506 and 520-586; these read KSNT…TWKS and IMKS…ADKH. Residues 552–561 are compositionally biased toward basic residues; it reads QLLRKPRRKT.

It localises to the membrane. In terms of biological role, involved in invasion during filamentous growth. The chain is Protein DFG16 (DFG16) from Saccharomyces cerevisiae (strain ATCC 204508 / S288c) (Baker's yeast).